Reading from the N-terminus, the 66-residue chain is Large ribosomal subunit protein bL31 (66 aa).

Positions 16, 18, 36, and 39 each coordinate Zn(2+).

It belongs to the bacterial ribosomal protein bL31 family. Type A subfamily. In terms of assembly, part of the 50S ribosomal subunit. Requires Zn(2+) as cofactor.

Its function is as follows. Binds the 23S rRNA. The sequence is that of Large ribosomal subunit protein bL31 from Geobacillus kaustophilus (strain HTA426).